The chain runs to 2058 residues: E3 ubiquitin-protein ligase ubr-1 (2058 aa).

The UBR-type zinc finger occupies 93-164 (QICGHVFKNG…EGYACANHEK (72 aa)). Residues 1107–1175 (VPEAAPAPEN…TPSEKSETVV (69 aa)) form a disordered region. Residues 1108–1119 (PEAAPAPENKPA) show a composition bias toward low complexity. 2 stretches are compositionally biased toward basic and acidic residues: residues 1123-1138 (EEIKAKRAARAAEMRQ) and 1153-1175 (KKIEDEEKKDESQTPSEKSETVV). The segment at 1217-1335 (LTCILCQEDE…GEYQCPLCKR (119 aa)) adopts an RING-type; atypical zinc-finger fold. Disordered stretches follow at residues 1381–1416 (LSSESVSKKGHSRKRSHSERSLLDLEKLSKDPDTAN) and 1475–1499 (PAATPETIPAIGSSSRIPESQESGK). The span at 1388-1397 (KKGHSRKRSH) shows a compositional bias: basic residues. Over residues 1398-1413 (SERSLLDLEKLSKDPD) the composition is skewed to basic and acidic residues. The span at 1486-1495 (GSSSRIPESQ) shows a compositional bias: polar residues. A helical transmembrane segment spans residues 1695–1715 (ILQIDILSLAISLMMTIGWTW).

It belongs to the E3 ubiquitin-protein ligase UBR1-like family. In terms of assembly, interacts with ubc-1. Component of a complex containing at least ced-3, ubr-1 and possibly ate-1. Within complex interacts with ced-3 (via the p17 subunit); this interaction is required for the ced-3-mediated cleavage and subsequent degradation of the heterochronic protein lin-28. As to expression, expressed in pharyngeal muscles, body wall muscles and a subset of neurons throughout postembryonic development. Prominently expressed in premotor interneurons, but not expressed in ventral cord motor neurons. Weakly expressed in hypodermal seam cells.

The protein resides in the membrane. It catalyses the reaction S-ubiquitinyl-[E2 ubiquitin-conjugating enzyme]-L-cysteine + [acceptor protein]-L-lysine = [E2 ubiquitin-conjugating enzyme]-L-cysteine + N(6)-ubiquitinyl-[acceptor protein]-L-lysine.. The protein operates within protein modification; protein ubiquitination. Its function is as follows. E3 ubiquitin-protein ligase which is a component of the N-end rule pathway. Recognizes and binds to proteins bearing specific N-terminal residues that are destabilizing according to the N-end rule, leading to their ubiquitination and subsequent degradation. In complex with ced-3, required for the ced-3-mediated cleavage and subsequent degradation of the heterochronic protein lin-28 to regulate seam cell fate patterning during larval development. Negatively regulates glutamate metabolism through the aspartate aminotransferase got-1.2. Modulation of glutamate levels most likely controls locomotory behavior, in particular backwards locomotion or 'reversals'. This chain is E3 ubiquitin-protein ligase ubr-1, found in Caenorhabditis elegans.